A 26-amino-acid chain; its full sequence is Mitochondrial import receptor subunit TOM7-2 (26 aa).

It belongs to the Tom7 family. Forms part of the preprotein translocase complex of the outer mitochondrial membrane (TOM complex).

It localises to the mitochondrion outer membrane. Functionally, seems to act as a modulator of the dynamics of the mitochondrial protein transport machinery. Seems to promote the dissociation of subunits of the outer membrane translocase. The polypeptide is Mitochondrial import receptor subunit TOM7-2 (TOM7-2) (Solanum tuberosum (Potato)).